The following is a 532-amino-acid chain: Zinc metalloproteinase nas-29 (532 aa).

The N-terminal stretch at 1-22 is a signal peptide; it reads MISKNTSFCGFLILVLATCMSA. N-linked (GlcNAc...) asparagine glycans are attached at residues N5, N27, N70, and N106. The propeptide occupies 23–134; the sequence is QFVSNESIKL…NGESTDRTKR (112 aa). The 201-residue stretch at 135–335 folds into the Peptidase M12A domain; the sequence is QAYLDNNYPA…HIMNQHYQCQ (201 aa). 6 disulfides stabilise this stretch: C179–C334, C201–C222, C338–C358, C360–C369, C380–C408, and C435–C456. Position 230 (H230) interacts with Zn(2+). Residue E231 is part of the active site. The Zn(2+) site is built by H234 and H240. One can recognise an EGF-like domain in the interval 330–370; sequence QHYQCQEKCPTQAPCQNGGFTNSRNCKVCKCPTGFGGAYCQ. Residues 380-494 enclose the CUB domain; that stretch reads CGGYLNAEET…VSFEYSFVST (115 aa). Residue N503 is glycosylated (N-linked (GlcNAc...) asparagine).

Zn(2+) serves as cofactor.

The protein resides in the secreted. Functionally, metalloprotease. The chain is Zinc metalloproteinase nas-29 (nas-29) from Caenorhabditis elegans.